The following is a 160-amino-acid chain: Transcription antitermination protein NusB (160 aa).

The protein belongs to the NusB family.

Functionally, involved in transcription antitermination. Required for transcription of ribosomal RNA (rRNA) genes. Binds specifically to the boxA antiterminator sequence of the ribosomal RNA (rrn) operons. The sequence is that of Transcription antitermination protein NusB from Sinorhizobium fredii (strain NBRC 101917 / NGR234).